Consider the following 467-residue polypeptide: ATP synthase subunit beta (467 aa).

G156–T163 contacts ATP.

This sequence belongs to the ATPase alpha/beta chains family. As to quaternary structure, F-type ATPases have 2 components, CF(1) - the catalytic core - and CF(0) - the membrane proton channel. CF(1) has five subunits: alpha(3), beta(3), gamma(1), delta(1), epsilon(1). CF(0) has three main subunits: a(1), b(2) and c(9-12). The alpha and beta chains form an alternating ring which encloses part of the gamma chain. CF(1) is attached to CF(0) by a central stalk formed by the gamma and epsilon chains, while a peripheral stalk is formed by the delta and b chains.

Its subcellular location is the cell membrane. It carries out the reaction ATP + H2O + 4 H(+)(in) = ADP + phosphate + 5 H(+)(out). Its function is as follows. Produces ATP from ADP in the presence of a proton gradient across the membrane. The catalytic sites are hosted primarily by the beta subunits. The chain is ATP synthase subunit beta from Cytobacillus firmus (Bacillus firmus).